The sequence spans 400 residues: Tyrosine--tRNA ligase 2 (400 aa).

The 'HIGH' region signature appears at 46 to 55 (PSAPDIHLGH). The 'KMSKS' region signature appears at 230 to 234 (KMSKS). Lys-233 serves as a coordination point for ATP. The S4 RNA-binding domain maps to 339 to 399 (NNLIEAIVKI…GKKKIVKLLV (61 aa)).

Belongs to the class-I aminoacyl-tRNA synthetase family. TyrS type 2 subfamily. Homodimer.

It localises to the cytoplasm. The enzyme catalyses tRNA(Tyr) + L-tyrosine + ATP = L-tyrosyl-tRNA(Tyr) + AMP + diphosphate + H(+). Its function is as follows. Catalyzes the attachment of tyrosine to tRNA(Tyr) in a two-step reaction: tyrosine is first activated by ATP to form Tyr-AMP and then transferred to the acceptor end of tRNA(Tyr). The chain is Tyrosine--tRNA ligase 2 from Clostridium acetobutylicum (strain ATCC 824 / DSM 792 / JCM 1419 / IAM 19013 / LMG 5710 / NBRC 13948 / NRRL B-527 / VKM B-1787 / 2291 / W).